Reading from the N-terminus, the 215-residue chain is Octanoyltransferase (215 aa).

The BPL/LPL catalytic domain occupies 31–206; sequence PDSQDEIWLV…QLVKHLDYAE (176 aa). Substrate contacts are provided by residues 70–77, 137–139, and 150–152; these read RGGQVTYH, SLG, and GLA. The active-site Acyl-thioester intermediate is the Cys-168.

It belongs to the LipB family.

The protein localises to the cytoplasm. It carries out the reaction octanoyl-[ACP] + L-lysyl-[protein] = N(6)-octanoyl-L-lysyl-[protein] + holo-[ACP] + H(+). Its pathway is protein modification; protein lipoylation via endogenous pathway; protein N(6)-(lipoyl)lysine from octanoyl-[acyl-carrier-protein]: step 1/2. Its function is as follows. Catalyzes the transfer of endogenously produced octanoic acid from octanoyl-acyl-carrier-protein onto the lipoyl domains of lipoate-dependent enzymes. Lipoyl-ACP can also act as a substrate although octanoyl-ACP is likely to be the physiological substrate. This is Octanoyltransferase from Pseudomonas putida (strain GB-1).